A 616-amino-acid chain; its full sequence is Chaperone protein HscA (616 aa).

Belongs to the heat shock protein 70 family.

Chaperone involved in the maturation of iron-sulfur cluster-containing proteins. Has a low intrinsic ATPase activity which is markedly stimulated by HscB. Involved in the maturation of IscU. The polypeptide is Chaperone protein HscA (Yersinia enterocolitica serotype O:8 / biotype 1B (strain NCTC 13174 / 8081)).